We begin with the raw amino-acid sequence, 368 residues long: tRNA(Met) cytidine acetate ligase (368 aa).

ATP contacts are provided by residues 7-20 (IAEF…HKYL), glycine 96, asparagine 152, and arginine 175.

It belongs to the TmcAL family.

It is found in the cytoplasm. It catalyses the reaction cytidine(34) in elongator tRNA(Met) + acetate + ATP = N(4)-acetylcytidine(34) in elongator tRNA(Met) + AMP + diphosphate. In terms of biological role, catalyzes the formation of N(4)-acetylcytidine (ac(4)C) at the wobble position of elongator tRNA(Met), using acetate and ATP as substrates. First activates an acetate ion to form acetyladenylate (Ac-AMP) and then transfers the acetyl group to tRNA to form ac(4)C34. The protein is tRNA(Met) cytidine acetate ligase of Streptococcus pyogenes serotype M5 (strain Manfredo).